Here is a 299-residue protein sequence, read N- to C-terminus: ATP phosphoribosyltransferase (299 aa).

Belongs to the ATP phosphoribosyltransferase family. Long subfamily. The cofactor is Mg(2+).

Its subcellular location is the cytoplasm. The catalysed reaction is 1-(5-phospho-beta-D-ribosyl)-ATP + diphosphate = 5-phospho-alpha-D-ribose 1-diphosphate + ATP. The protein operates within amino-acid biosynthesis; L-histidine biosynthesis; L-histidine from 5-phospho-alpha-D-ribose 1-diphosphate: step 1/9. With respect to regulation, feedback inhibited by histidine. Its function is as follows. Catalyzes the condensation of ATP and 5-phosphoribose 1-diphosphate to form N'-(5'-phosphoribosyl)-ATP (PR-ATP). Has a crucial role in the pathway because the rate of histidine biosynthesis seems to be controlled primarily by regulation of HisG enzymatic activity. The chain is ATP phosphoribosyltransferase from Actinobacillus pleuropneumoniae serotype 5b (strain L20).